The chain runs to 26 residues: Dermaseptin-J4 (26 aa).

Val-26 is subject to Valine amide.

In terms of tissue distribution, expressed by the skin glands.

The protein resides in the secreted. Functionally, has antimicrobial activity. The polypeptide is Dermaseptin-J4 (Phasmahyla jandaia (Jandaia leaf frog)).